Reading from the N-terminus, the 224-residue chain is 7-cyano-7-deazaguanine synthase (224 aa).

ATP is bound at residue 10–20; that stretch reads LSGGLDSATVV. Zn(2+) is bound by residues Cys-189, Cys-199, Cys-202, and Cys-205.

Belongs to the QueC family. It depends on Zn(2+) as a cofactor.

It carries out the reaction 7-carboxy-7-deazaguanine + NH4(+) + ATP = 7-cyano-7-deazaguanine + ADP + phosphate + H2O + H(+). Its pathway is purine metabolism; 7-cyano-7-deazaguanine biosynthesis. In terms of biological role, catalyzes the ATP-dependent conversion of 7-carboxy-7-deazaguanine (CDG) to 7-cyano-7-deazaguanine (preQ(0)). This chain is 7-cyano-7-deazaguanine synthase, found in Pseudomonas putida (strain W619).